A 428-amino-acid chain; its full sequence is Putative UPF0496 protein 5 (428 aa).

The span at 1–14 shows a compositional bias: basic residues; it reads MGNRHGIMRPRRLA. The disordered stretch occupies residues 1 to 40; the sequence is MGNRHGIMRPRRLASGRSAAAAEEEGEDGEGEPGSYEAAC. A compositionally biased stretch (acidic residues) spans 22 to 31; sequence AEEEGEDGEG. 2 helical membrane-spanning segments follow: residues 229-249 and 252-272; these read IVFL…AAIA and PVAA…GKWM.

This sequence belongs to the UPF0496 family.

It is found in the membrane. The protein is Putative UPF0496 protein 5 of Oryza sativa subsp. indica (Rice).